The sequence spans 227 residues: Isopentenyl-diphosphate Delta-isomerase 1 (227 aa).

Substrate is bound at residue Lys-36. His-40 and His-51 together coordinate Mg(2+). The Nudix hydrolase domain maps to 49–199; the sequence is LLHRAFSVFL…EIKITPWFQI (151 aa). Residues Arg-70 and Lys-74 each contribute to the substrate site. The active site involves Cys-86. Substrate is bound at residue Ser-87. Mg(2+) contacts are provided by Glu-146 and Glu-148. Glu-148 is a catalytic residue. Lys-176 is modified (N6-acetyllysine). The Microbody targeting signal motif lies at 225–227; it reads HRM.

This sequence belongs to the IPP isomerase type 1 family. As to quaternary structure, monomer. It depends on Mg(2+) as a cofactor.

The protein localises to the peroxisome. The enzyme catalyses isopentenyl diphosphate = dimethylallyl diphosphate. It functions in the pathway isoprenoid biosynthesis; dimethylallyl diphosphate biosynthesis; dimethylallyl diphosphate from isopentenyl diphosphate: step 1/1. In terms of biological role, catalyzes the 1,3-allylic rearrangement of the homoallylic substrate isopentenyl (IPP) to its highly electrophilic allylic isomer, dimethylallyl diphosphate (DMAPP). This Macaca fascicularis (Crab-eating macaque) protein is Isopentenyl-diphosphate Delta-isomerase 1 (IDI1).